Consider the following 80-residue polypeptide: MPTKKNNFEEQLNELEKIVTNLENGNVPLEDALKEFQEGVKISRDLDKKLTNAEQTVAKLIDSDGTEHNLDPNNASAPEE.

Positions 60-80 (LIDSDGTEHNLDPNNASAPEE) are disordered. Positions 61-70 (IDSDGTEHNL) are enriched in basic and acidic residues. Over residues 71–80 (DPNNASAPEE) the composition is skewed to polar residues.

This sequence belongs to the XseB family. Heterooligomer composed of large and small subunits.

Its subcellular location is the cytoplasm. The enzyme catalyses Exonucleolytic cleavage in either 5'- to 3'- or 3'- to 5'-direction to yield nucleoside 5'-phosphates.. Bidirectionally degrades single-stranded DNA into large acid-insoluble oligonucleotides, which are then degraded further into small acid-soluble oligonucleotides. This Lactobacillus acidophilus (strain ATCC 700396 / NCK56 / N2 / NCFM) protein is Exodeoxyribonuclease 7 small subunit.